A 333-amino-acid polypeptide reads, in one-letter code: Dioxygenase cnsJ (333 aa).

H153, D155, and H235 together coordinate Fe cation. Positions 309–333 are disordered; that stretch reads NAQPEGEDDGGMKPNEGEHVVEAQI. Positions 323–333 are enriched in basic and acidic residues; the sequence is NEGEHVVEAQI.

Belongs to the PhyH family. Homodimer. Requires Fe cation as cofactor.

The protein operates within alkaloid biosynthesis. In terms of biological role, dioxygenase; part of the gene cluster that mediates the biosynthesis of communesins, a prominent class of indole alkaloids with great potential as pharmaceuticals. Communesins are biosynthesized by the coupling of tryptamine and aurantioclavine, two building blocks derived from L-tryptophan. The L-tryptophan decarboxylase cnsB converts L-tryptophan to tryptamine, whereas the tryptophan dimethylallyltransferase cnsF converts L-tryptophan to 4-dimethylallyl tryptophan which is further transformed to aurantioclavine by the aurantioclavine synthase cnsA, probably aided by the catalase cnsD. The cytochrome P450 monooxygenase cnsC catalyzes the heterodimeric coupling between the two different indole moieties, tryptamine and aurantioclavine, to construct vicinal quaternary stereocenters and yield the heptacyclic communesin scaffold. The O-methyltransferase cnsE then methylates the communesin scaffold to produce communesin K, the simplest characterized communesin that contains the heptacyclic core. The dioxygenase cnsJ converts communesin K into communesin I. Acylation to introduce the hexadienyl group at position N16 of communesin I by the acyltransferase cnsK leads to the production of communesin B. The hexadienyl group is produced by the highly reducing polyketide synthase cnsI, before being hydrolytically removed from cnsI by the serine hydrolase cnsH, converted into hexadienyl-CoA by the CoA ligase cnsG, and then transferred to communesin I by cnsK. Surprisingly, cnsK may also be a promiscuous acyltransferase that can tolerate a range of acyl groups, including acetyl-, propionyl-, and butyryl-CoA, which lead to communesins A, G and H respectively. The roles of the alpha-ketoglutarate-dependent dioxygenases cnsM and cnsP have still to be determined. The sequence is that of Dioxygenase cnsJ from Penicillium expansum (Blue mold rot fungus).